Consider the following 184-residue polypeptide: GMP synthase [glutamine-hydrolyzing] subunit A (184 aa).

Residues 3–184 form the Glutamine amidotransferase type-1 domain; it reads PICVVNNYGQ…YENFDAICTE (182 aa). Cysteine 75 functions as the Nucleophile in the catalytic mechanism. Catalysis depends on residues histidine 162 and glutamate 164.

As to quaternary structure, heterodimer composed of a glutamine amidotransferase subunit (A) and a GMP-binding subunit (B).

The enzyme catalyses XMP + L-glutamine + ATP + H2O = GMP + L-glutamate + AMP + diphosphate + 2 H(+). The protein operates within purine metabolism; GMP biosynthesis; GMP from XMP (L-Gln route): step 1/1. In terms of biological role, catalyzes the synthesis of GMP from XMP. The sequence is that of GMP synthase [glutamine-hydrolyzing] subunit A from Methanoregula boonei (strain DSM 21154 / JCM 14090 / 6A8).